The chain runs to 298 residues: uncharacterized protein (298 aa).

This is an uncharacterized protein from Ictalurid herpesvirus 1 (strain Auburn) (IcHV-1).